A 227-amino-acid chain; its full sequence is UPF0758 protein lpg2489 (227 aa).

In terms of domain architecture, MPN spans 102–225 (RLSNTQQTYA…YSIFAENKWV (124 aa)). Zn(2+) contacts are provided by His-173, His-175, and Asp-186. Residues 173-186 (HNHPSGLSDASQQD) carry the JAMM motif motif.

It belongs to the UPF0758 family.

The protein is UPF0758 protein lpg2489 of Legionella pneumophila subsp. pneumophila (strain Philadelphia 1 / ATCC 33152 / DSM 7513).